Reading from the N-terminus, the 368-residue chain is E3 ubiquitin-protein ligase ATL31 (368 aa).

The N-terminal stretch at 1 to 23 is a signal peptide; sequence MDPIKHISLPVLVLFLLLSVSAG. Residues 46–66 traverse the membrane as a helical segment; the sequence is AVVVVVVIAALFFMGFFTVYI. The RING-type; atypical zinc finger occupies 124–166; it reads CAICLNEFEDDETLRLLPKCDHVFHPHCIGAWLQGHVTCPVCR. Ser-247 is subject to Phosphoserine. The interval 342–368 is disordered; it reads NKDGEGTSSVQHIGTVGSTSGSLRLPV. The span at 347-368 shows a compositional bias: polar residues; sequence GTSSVQHIGTVGSTSGSLRLPV.

Belongs to the RING-type zinc finger family. ATL subfamily.

The protein localises to the membrane. It catalyses the reaction S-ubiquitinyl-[E2 ubiquitin-conjugating enzyme]-L-cysteine + [acceptor protein]-L-lysine = [E2 ubiquitin-conjugating enzyme]-L-cysteine + N(6)-ubiquitinyl-[acceptor protein]-L-lysine.. Its pathway is protein modification; protein ubiquitination. In terms of biological role, E3 ubiquitin-protein ligase that is required for the plant C/N response during seedling growth transition. May be involved in the early steps of the plant defense signaling pathway. The chain is E3 ubiquitin-protein ligase ATL31 (ATL31) from Arabidopsis thaliana (Mouse-ear cress).